We begin with the raw amino-acid sequence, 156 residues long: ATP synthase subunit b (156 aa).

Residues 11–31 (AIAFVLFVLFCMKYVWPPIMA) form a helical membrane-spanning segment.

This sequence belongs to the ATPase B chain family. F-type ATPases have 2 components, F(1) - the catalytic core - and F(0) - the membrane proton channel. F(1) has five subunits: alpha(3), beta(3), gamma(1), delta(1), epsilon(1). F(0) has three main subunits: a(1), b(2) and c(10-14). The alpha and beta chains form an alternating ring which encloses part of the gamma chain. F(1) is attached to F(0) by a central stalk formed by the gamma and epsilon chains, while a peripheral stalk is formed by the delta and b chains.

It is found in the cell inner membrane. Its function is as follows. F(1)F(0) ATP synthase produces ATP from ADP in the presence of a proton or sodium gradient. F-type ATPases consist of two structural domains, F(1) containing the extramembraneous catalytic core and F(0) containing the membrane proton channel, linked together by a central stalk and a peripheral stalk. During catalysis, ATP synthesis in the catalytic domain of F(1) is coupled via a rotary mechanism of the central stalk subunits to proton translocation. Component of the F(0) channel, it forms part of the peripheral stalk, linking F(1) to F(0). This chain is ATP synthase subunit b, found in Proteus mirabilis (strain HI4320).